Here is a 467-residue protein sequence, read N- to C-terminus: Phosphoglucosamine mutase (467 aa).

Ser120 acts as the Phosphoserine intermediate in catalysis. Mg(2+)-binding residues include Ser120, Asp261, Asp263, and Asp265. Ser120 carries the phosphoserine modification.

The protein belongs to the phosphohexose mutase family. Mg(2+) serves as cofactor. In terms of processing, activated by phosphorylation.

It carries out the reaction alpha-D-glucosamine 1-phosphate = D-glucosamine 6-phosphate. Functionally, catalyzes the conversion of glucosamine-6-phosphate to glucosamine-1-phosphate. This chain is Phosphoglucosamine mutase, found in Parafrankia sp. (strain EAN1pec).